A 232-amino-acid polypeptide reads, in one-letter code: Large ribosomal subunit protein uL1 (232 aa).

This sequence belongs to the universal ribosomal protein uL1 family. As to quaternary structure, part of the 50S ribosomal subunit.

Its function is as follows. Binds directly to 23S rRNA. The L1 stalk is quite mobile in the ribosome, and is involved in E site tRNA release. Functionally, protein L1 is also a translational repressor protein, it controls the translation of the L11 operon by binding to its mRNA. The protein is Large ribosomal subunit protein uL1 of Chelativorans sp. (strain BNC1).